A 199-amino-acid chain; its full sequence is NAD(P)H-quinone oxidoreductase chain 6 (199 aa).

Transmembrane regions (helical) follow at residues 9 to 29 (IVSF…VVLL), 32 to 52 (VVYS…LYLL), 61 to 81 (AQVL…IMLV), 102 to 122 (LVCA…PWAI), and 143 to 163 (FLLP…GAIV).

It belongs to the complex I subunit 6 family.

It is found in the membrane. It carries out the reaction a plastoquinone + NADH + (n+1) H(+)(in) = a plastoquinol + NAD(+) + n H(+)(out). It catalyses the reaction a plastoquinone + NADPH + (n+1) H(+)(in) = a plastoquinol + NADP(+) + n H(+)(out). In terms of biological role, NDH-1 shuttles electrons from NAD(P)H, via FMN and iron-sulfur (Fe-S) centers, to quinones in the respiratory chain. The immediate electron acceptor for the enzyme in this species is believed to be plastoquinone. Couples the redox reaction to proton translocation (for every two electrons transferred, four hydrogen ions are translocated across the cytoplasmic membrane), and thus conserves the redox energy in a proton gradient. This Leptolyngbya boryana (Plectonema boryanum) protein is NAD(P)H-quinone oxidoreductase chain 6 (ndhG).